A 40-amino-acid polypeptide reads, in one-letter code: RapK inhibitor (40 aa).

2 consecutive propeptides follow at residues Met-1–Ala-34 and Gly-40.

It belongs to the Phr family. In terms of processing, contains a predicted signal peptide cleavage site in the N-terminal region, however the propeptide is probably only subject to processing events at the ends of the mature peptide.

The protein resides in the secreted. It localises to the cytoplasm. Its function is as follows. Signaling molecule involved in the regulation of genetic competence development. Secreted during production, but the mature peptide acts intracellularly, indicating that it needs to be imported into the cell to function. Stimulates expression of the genes controlled by ComA, a transcriptional factor that regulates the development of genetic competence. Acts by inhibiting RapK, which regulates the activity of ComA. This chain is RapK inhibitor (phrK), found in Bacillus subtilis (strain 168).